A 404-amino-acid polypeptide reads, in one-letter code: MFKINENYLKLQGSYLFSTIGKKVRTYKEENPDKNVISLGIGDVTLPLAPSIISALHKATDEMAAKETFKGYSPDLGYEFLRSAIAKHDYEARGVQIALDEIFISDGAKSDSGNIGDIFAENNKIAVCDPVYPVYVDTNVMAGRTGEFNYTTGKWSNVIYMPCTKENKFVPSLPAETPDIIYLCFPNNPTGSAITKMKLQKWVDYAIEKGAVIIYDAAYEAYISEENCPHTIYECDGAKKCAIELRSFSKNAGFTGTRLGFTIVPKELTSDGVSLNSLWARRHGTKFNGAPYIIQTAGAAVYSPEGIAETREQINYYMNNARVIRDGLLEAGYQVSGGVNAPYIWLHTPDGMTSWEYFDYLLQNASVVGTPGSGFGPSGEGYFRLTAFGTYENTLEALRRIKNL.

2 residues coordinate substrate: Tyr-15 and Gly-42. Residues Tyr-72, 108–109 (AK), Tyr-132, Asn-188, Tyr-219, and 247–249 (SFS) contribute to the pyridoxal 5'-phosphate site. The substrate site is built by Lys-109, Tyr-132, and Asn-188. Lys-250 bears the N6-(pyridoxal phosphate)lysine mark. Residues Arg-258 and Asn-288 each contribute to the pyridoxal 5'-phosphate site. Substrate-binding residues include Asn-288 and Arg-384.

It belongs to the class-I pyridoxal-phosphate-dependent aminotransferase family. LL-diaminopimelate aminotransferase subfamily. In terms of assembly, homodimer. Requires pyridoxal 5'-phosphate as cofactor.

The enzyme catalyses (2S,6S)-2,6-diaminopimelate + 2-oxoglutarate = (S)-2,3,4,5-tetrahydrodipicolinate + L-glutamate + H2O + H(+). Its pathway is amino-acid biosynthesis; L-lysine biosynthesis via DAP pathway; LL-2,6-diaminopimelate from (S)-tetrahydrodipicolinate (aminotransferase route): step 1/1. Its function is as follows. Involved in the synthesis of meso-diaminopimelate (m-DAP or DL-DAP), required for both lysine and peptidoglycan biosynthesis. Catalyzes the direct conversion of tetrahydrodipicolinate to LL-diaminopimelate. The polypeptide is LL-diaminopimelate aminotransferase (Lachnoclostridium phytofermentans (strain ATCC 700394 / DSM 18823 / ISDg) (Clostridium phytofermentans)).